A 353-amino-acid chain; its full sequence is MYGALRKALFLVPPERIHGLVFAGLRAATTPVPLRRSLSRRLAPHDPVLASTVFGVRFPGPLGLAAGFDKDGLGVHTWGALGFGYAELGTVTAQAQPGNPPPRMFRLPADRALLNRMGFNNHGSAALALQLARSSSDVPIGVNIGKTKVTEPQDAPADYAESARLLGSLAAYLVVNVSSPNTPGLRDLQSVESLRPILSAVLAETSTPVLVKIAPDLADTDIDDIADLAVELGLAGIVATNTTISRDGLKTPGAADLGAGGISGPPVARRALEVLRRLYARVGDKLVLISVGGIETSDDAWERITAGASLLQGYTGFVYGGGLWARSINDGVAARLRENGFGTLAEAVGSAAR.

FMN-binding positions include 66 to 70 (AGFDK) and threonine 90. A substrate-binding site is contributed by lysine 70. 115–119 (NRMGF) contacts substrate. FMN is bound by residues asparagine 143 and asparagine 176. Asparagine 176 contacts substrate. The Nucleophile role is filled by serine 179. Residue asparagine 181 participates in substrate binding. Residues lysine 212 and threonine 240 each coordinate FMN. 241–242 (NT) is a substrate binding site. FMN is bound by residues glycine 264, glycine 293, and 314–315 (YT).

Belongs to the dihydroorotate dehydrogenase family. Type 2 subfamily. In terms of assembly, monomer. FMN is required as a cofactor.

The protein resides in the cell membrane. It carries out the reaction (S)-dihydroorotate + a quinone = orotate + a quinol. The protein operates within pyrimidine metabolism; UMP biosynthesis via de novo pathway; orotate from (S)-dihydroorotate (quinone route): step 1/1. Functionally, catalyzes the conversion of dihydroorotate to orotate with quinone as electron acceptor. In Mycolicibacterium gilvum (strain PYR-GCK) (Mycobacterium gilvum (strain PYR-GCK)), this protein is Dihydroorotate dehydrogenase (quinone).